The following is a 365-amino-acid chain: Probable L-tyrosine/L-aspartate decarboxylase (365 aa).

N6-(pyridoxal phosphate)lysine is present on Lys225.

Belongs to the group II decarboxylase family. MfnA subfamily. The cofactor is pyridoxal 5'-phosphate.

The catalysed reaction is L-tyrosine + H(+) = tyramine + CO2. The enzyme catalyses L-aspartate + H(+) = beta-alanine + CO2. It functions in the pathway cofactor biosynthesis; methanofuran biosynthesis. It participates in cofactor biosynthesis; coenzyme A biosynthesis. Catalyzes the decarboxylation of L-tyrosine to produce tyramine for methanofuran biosynthesis. Can also catalyze the decarboxylation of L-aspartate to produce beta-alanine for coenzyme A (CoA) biosynthesis. In Methanocorpusculum labreanum (strain ATCC 43576 / DSM 4855 / Z), this protein is Probable L-tyrosine/L-aspartate decarboxylase.